A 162-amino-acid chain; its full sequence is 3-dehydroquinate dehydratase (162 aa).

Y22 functions as the Proton acceptor in the catalytic mechanism. Substrate-binding residues include N73, H79, and D86. The Proton donor role is filled by H99. Substrate is bound by residues L100–S101 and R110.

This sequence belongs to the type-II 3-dehydroquinase family. As to quaternary structure, homododecamer.

The catalysed reaction is 3-dehydroquinate = 3-dehydroshikimate + H2O. It functions in the pathway metabolic intermediate biosynthesis; chorismate biosynthesis; chorismate from D-erythrose 4-phosphate and phosphoenolpyruvate: step 3/7. Functionally, catalyzes a trans-dehydration via an enolate intermediate. This chain is 3-dehydroquinate dehydratase, found in Sulfurovum sp. (strain NBC37-1).